Reading from the N-terminus, the 181-residue chain is Large ribosomal subunit protein uL10 (181 aa).

This sequence belongs to the universal ribosomal protein uL10 family. In terms of assembly, part of the ribosomal stalk of the 50S ribosomal subunit. The N-terminus interacts with L11 and the large rRNA to form the base of the stalk. The C-terminus forms an elongated spine to which L12 dimers bind in a sequential fashion forming a multimeric L10(L12)X complex.

Functionally, forms part of the ribosomal stalk, playing a central role in the interaction of the ribosome with GTP-bound translation factors. The protein is Large ribosomal subunit protein uL10 of Chloroflexus aggregans (strain MD-66 / DSM 9485).